The sequence spans 279 residues: Tryptophan 2,3-dioxygenase (279 aa).

Substrate-binding positions include 48–52 (FIVIH), Tyr-110, and Arg-114. A heme-binding site is contributed by His-237. A substrate-binding site is contributed by Thr-251.

It belongs to the tryptophan 2,3-dioxygenase family. Homotetramer. Heme serves as cofactor.

The catalysed reaction is L-tryptophan + O2 = N-formyl-L-kynurenine. It participates in amino-acid degradation; L-tryptophan degradation via kynurenine pathway; L-kynurenine from L-tryptophan: step 1/2. Heme-dependent dioxygenase that catalyzes the oxidative cleavage of the L-tryptophan (L-Trp) pyrrole ring and converts L-tryptophan to N-formyl-L-kynurenine. Catalyzes the oxidative cleavage of the indole moiety. The polypeptide is Tryptophan 2,3-dioxygenase (Bacillus cereus (strain ATCC 10987 / NRS 248)).